We begin with the raw amino-acid sequence, 152 residues long: Superoxide dismutase [Cu-Zn] (152 aa).

Cys-7 carries S-palmitoyl cysteine lipidation. Cu cation is bound by residues His-47, His-49, and His-64. Cys-58 and Cys-146 are disulfide-bonded. Residues His-64, His-72, His-81, and Asp-84 each coordinate Zn(2+). His-120 is a binding site for Cu cation.

This sequence belongs to the Cu-Zn superoxide dismutase family. Homodimer. It depends on Cu cation as a cofactor. The cofactor is Zn(2+).

The protein resides in the cytoplasm. It is found in the nucleus. The enzyme catalyses 2 superoxide + 2 H(+) = H2O2 + O2. Its function is as follows. Destroys radicals which are normally produced within the cells and which are toxic to biological systems. The sequence is that of Superoxide dismutase [Cu-Zn] (sod1) from Xiphias gladius (Swordfish).